A 341-amino-acid polypeptide reads, in one-letter code: S-adenosylmethionine:tRNA ribosyltransferase-isomerase (341 aa).

It belongs to the QueA family. As to quaternary structure, monomer.

Its subcellular location is the cytoplasm. The catalysed reaction is 7-aminomethyl-7-carbaguanosine(34) in tRNA + S-adenosyl-L-methionine = epoxyqueuosine(34) in tRNA + adenine + L-methionine + 2 H(+). It functions in the pathway tRNA modification; tRNA-queuosine biosynthesis. In terms of biological role, transfers and isomerizes the ribose moiety from AdoMet to the 7-aminomethyl group of 7-deazaguanine (preQ1-tRNA) to give epoxyqueuosine (oQ-tRNA). This Clostridium botulinum (strain Eklund 17B / Type B) protein is S-adenosylmethionine:tRNA ribosyltransferase-isomerase.